Consider the following 242-residue polypeptide: Triosephosphate isomerase (242 aa).

Residue N8 to K10 coordinates substrate. Catalysis depends on H91, which acts as the Electrophile. E155 acts as the Proton acceptor in catalysis. Positions 161 and 192 each coordinate substrate.

Belongs to the triosephosphate isomerase family. Homodimer.

The protein resides in the cytoplasm. The catalysed reaction is D-glyceraldehyde 3-phosphate = dihydroxyacetone phosphate. The protein operates within carbohydrate biosynthesis; gluconeogenesis. It participates in carbohydrate degradation; glycolysis; D-glyceraldehyde 3-phosphate from glycerone phosphate: step 1/1. Functionally, involved in the gluconeogenesis. Catalyzes stereospecifically the conversion of dihydroxyacetone phosphate (DHAP) to D-glyceraldehyde-3-phosphate (G3P). The chain is Triosephosphate isomerase from Wolbachia pipientis wMel.